The chain runs to 227 residues: Ras-related protein Rab-3C (227 aa).

GTP is bound by residues Ser39, Gly42, Lys43, Thr44, Ser45, Thr56, Ser57, Ser61, and Thr62. Thr44 contacts Mg(2+). Positions 53–66 (DSFTSAFVSTVGID) match the Switch 1 motif. Positions 62 and 85 each coordinate Mg(2+). Residue Thr86 is modified to Phosphothreonine. A Switch 2 motif is present at residues 86-104 (TAGQERYRTITTAYYRGAM). The GTP site is built by Gly88, Asn143, Lys144, Asp146, Ala174, and Lys175. A phosphoserine mark is found at Ser196 and Ser198. Position 206 is a phosphothreonine (Thr206). Residues Cys225 and Cys227 are each lipidated (S-geranylgeranyl cysteine). A Cysteine methyl ester modification is found at Cys227.

Belongs to the small GTPase superfamily. Rab family. In terms of assembly, interacts with RIMS1, RIMS2, RPH3A and RPH3AL. The GTP-bound form interacts with REP15. Interacts with GDI2, CHM and CHML; phosphorylation at Thr-86 disrupts these interactions. Interacts with MADD (via uDENN domain); the GTP-bound form is preferred for interaction. The cofactor is Mg(2+). Post-translationally, phosphorylation of Thr-86 in the switch II region by LRRK2 prevents the association of RAB regulatory proteins, including CHM, CHML and RAB GDP dissociation inhibitor GDI2.

Its subcellular location is the cell membrane. The catalysed reaction is GTP + H2O = GDP + phosphate + H(+). Its activity is regulated as follows. Regulated by guanine nucleotide exchange factors (GEFs) which promote the exchange of bound GDP for free GTP. Regulated by GTPase activating proteins (GAPs) which increase the GTP hydrolysis activity. Inhibited by GDP dissociation inhibitors (GDIs) which prevent Rab-GDP dissociation. The small GTPases Rab are key regulators of intracellular membrane trafficking, from the formation of transport vesicles to their fusion with membranes. Rabs cycle between an inactive GDP-bound form and an active GTP-bound form that is able to recruit to membranes different sets of downstream effectors directly responsible for vesicle formation, movement, tethering and fusion. This chain is Ras-related protein Rab-3C (RAB3C), found in Bos taurus (Bovine).